Reading from the N-terminus, the 902-residue chain is Auxin response factor 5 (902 aa).

Positions 158–260 form a DNA-binding region, TF-B3; the sequence is FCKTLTASDT…QLMVGVRRAN (103 aa). The segment at 497–543 is disordered; the sequence is SEMVQPQNKLTVNPSASNTSGQEQNLSQSMSAPAKPENSTLSGCSSG. A PB1 domain is found at 793 to 877; the sequence is RTYTKVQKTG…RCIRILSPTE (85 aa).

Belongs to the ARF family. Homodimers and heterodimers. Interacts with BRX and the auxin-responsive proteins IAA1, IAA12 (BODENLOS), IAA17 and ARF7. As to expression, expressed in the whole plant with a lower expression in leaves. Detected in embryo axis, provascular tissues, procambium and some differentiated vascular regions of mature organs.

It localises to the nucleus. Auxin response factors (ARFs) are transcriptional factors that bind specifically to the DNA sequence 5'-TGTCTC-3' found in the auxin-responsive promoter elements (AuxREs). Seems to act as transcriptional activator. Formation of heterodimers with Aux/IAA proteins may alter their ability to modulate early auxin response genes expression. Mediates embryo axis formation and vascular tissues differentiation. Functionally redundant with ARF7. May be necessary to counteract AMP1 activity. This is Auxin response factor 5 (ARF5) from Arabidopsis thaliana (Mouse-ear cress).